Consider the following 217-residue polypeptide: Ribosomal RNA small subunit methyltransferase G (217 aa).

S-adenosyl-L-methionine is bound by residues Gly79, Phe84, 130–131, and Arg148; that span reads AE.

This sequence belongs to the methyltransferase superfamily. RNA methyltransferase RsmG family.

The protein resides in the cytoplasm. The catalysed reaction is guanosine(527) in 16S rRNA + S-adenosyl-L-methionine = N(7)-methylguanosine(527) in 16S rRNA + S-adenosyl-L-homocysteine. Specifically methylates the N7 position of guanine in position 527 of 16S rRNA. The protein is Ribosomal RNA small subunit methyltransferase G of Myxococcus xanthus (strain DK1622).